The chain runs to 444 residues: Trigger factor (444 aa).

One can recognise a PPIase FKBP-type domain in the interval 185 to 270; sequence GDKLIIDFEG…VNEIQIAKDF (86 aa).

The protein belongs to the FKBP-type PPIase family. Tig subfamily.

The protein resides in the cytoplasm. It carries out the reaction [protein]-peptidylproline (omega=180) = [protein]-peptidylproline (omega=0). Involved in protein export. Acts as a chaperone by maintaining the newly synthesized protein in an open conformation. Functions as a peptidyl-prolyl cis-trans isomerase. The sequence is that of Trigger factor from Wolbachia pipientis wMel.